A 690-amino-acid polypeptide reads, in one-letter code: Methionine--tRNA ligase (690 aa).

Positions 12–22 (PYANGPLHLGH) match the 'HIGH' region motif. Residues Cys-144, Cys-147, Cys-157, and Cys-160 each coordinate Zn(2+). A 'KMSKS' region motif is present at residues 333-337 (QFSKS). Lys-336 is an ATP binding site. Residues 535–632 (KKINIDLMVG…VNADDGSRMK (98 aa)) form the tRNA-binding domain.

Belongs to the class-I aminoacyl-tRNA synthetase family. MetG type 1 subfamily. As to quaternary structure, homodimer. The cofactor is Zn(2+).

The protein localises to the cytoplasm. It catalyses the reaction tRNA(Met) + L-methionine + ATP = L-methionyl-tRNA(Met) + AMP + diphosphate. Its function is as follows. Is required not only for elongation of protein synthesis but also for the initiation of all mRNA translation through initiator tRNA(fMet) aminoacylation. This chain is Methionine--tRNA ligase, found in Picrophilus torridus (strain ATCC 700027 / DSM 9790 / JCM 10055 / NBRC 100828 / KAW 2/3).